The following is a 295-amino-acid chain: Hydroxyquinol 1,2-dioxygenase (295 aa).

Fe cation-binding residues include Tyr-165, Tyr-200, His-224, and His-226.

This sequence belongs to the intradiol ring-cleavage dioxygenase family. The cofactor is Fe(3+).

It carries out the reaction benzene-1,2,4-triol + O2 = maleylacetate + 2 H(+). It participates in aromatic compound metabolism. Involved in the gamma-resorcylate (2,6-dihydroxybenzoate) catabolism. Catalyzes the conversion of hydroxyquinol to malelylacetate. The polypeptide is Hydroxyquinol 1,2-dioxygenase (Rhizobium sp. (strain MTP-10005)).